The chain runs to 223 residues: Putative 3-methyladenine DNA glycosylase (223 aa).

It belongs to the DNA glycosylase MPG family.

This Pseudomonas savastanoi pv. phaseolicola (strain 1448A / Race 6) (Pseudomonas syringae pv. phaseolicola (strain 1448A / Race 6)) protein is Putative 3-methyladenine DNA glycosylase.